Here is a 197-residue protein sequence, read N- to C-terminus: Endo-1,4-beta-xylanase A (197 aa).

One can recognise a GH11 domain in the interval 1-197 (SGTPSSTGTD…SSGTATITVT (197 aa)). Glutamate 87 (nucleophile) is an active-site residue. The cysteines at positions 111 and 160 are disulfide-linked. Catalysis depends on glutamate 184, which acts as the Proton donor.

This sequence belongs to the glycosyl hydrolase 11 (cellulase G) family.

Its subcellular location is the secreted. It carries out the reaction Endohydrolysis of (1-&gt;4)-beta-D-xylosidic linkages in xylans.. It participates in glycan degradation; xylan degradation. Its function is as follows. Hydrolyzes xylans into xylobiose and xylose. The polypeptide is Endo-1,4-beta-xylanase A (XYNA) (Schizophyllum commune (Split gill fungus)).